The chain runs to 412 residues: cAMP-dependent protein kinase regulatory subunit (412 aa).

The dimerization and phosphorylation stretch occupies residues 1-142; it reads MSFEEVYEEL…RLKRSVAGNF (142 aa). The short motif at 101–105 is the Pseudophosphorylation motif element; that stretch reads RRQSV. At Ser-104 the chain carries Phosphoserine. 3',5'-cyclic AMP contacts are provided by residues 143-277, Glu-224, Arg-233, 278-412, Glu-344, and Arg-353; these read LFKN…EEVP and ILSS…STKA. Positions 392 to 412 are disordered; that stretch reads MGMDNEYGDQSLHRSPPSTKA.

Belongs to the cAMP-dependent kinase regulatory chain family. As to quaternary structure, tetramer, composed of 2 regulatory (R) and 2 catalytic (C) subunits. In the presence of cAMP it dissociates into 2 active monomeric C subunits and an R dimer.

The chain is cAMP-dependent protein kinase regulatory subunit (cgs1) from Schizosaccharomyces pombe (strain 972 / ATCC 24843) (Fission yeast).